Consider the following 101-residue polypeptide: Small integral membrane protein 21 (101 aa).

Residues 49-65 (HIRFFTLLVLFHVMVLL) form a helical membrane-spanning segment.

It localises to the membrane. The polypeptide is Small integral membrane protein 21 (SMIM21) (Homo sapiens (Human)).